We begin with the raw amino-acid sequence, 744 residues long: ATP-dependent zinc metalloprotease FtsH (744 aa).

Residues 1-16 (MQDQNNSNTPKKKKLS) are Cytoplasmic-facing. The chain crosses the membrane as a helical span at residues 17 to 37 (FWGIIGIVASILVLLVIAYII). The Extracellular portion of the chain corresponds to 38-177 (YYYVSQTTVL…ESIWSTVLRY (140 aa)). The helical transmembrane segment at 178-198 (GTNIIFLLLFAASFIFMFMSF) threads the bilayer. Residues 199–744 (RSQRGTGGLL…EEKSKDEKNN (546 aa)) are Cytoplasmic-facing. 264-271 (GPPGTGKT) contacts ATP. His-486 lines the Zn(2+) pocket. Glu-487 is a catalytic residue. Residues His-490 and Asp-564 each coordinate Zn(2+). The segment at 722-744 (IEANKSSSKSTVNEEKSKDEKNN) is disordered. The span at 733 to 744 (VNEEKSKDEKNN) shows a compositional bias: basic and acidic residues.

It in the central section; belongs to the AAA ATPase family. This sequence in the C-terminal section; belongs to the peptidase M41 family. As to quaternary structure, homohexamer. Zn(2+) serves as cofactor.

The protein resides in the cell membrane. Functionally, acts as a processive, ATP-dependent zinc metallopeptidase for both cytoplasmic and membrane proteins. Plays a role in the quality control of integral membrane proteins. The polypeptide is ATP-dependent zinc metalloprotease FtsH (Metamycoplasma arthritidis (strain 158L3-1) (Mycoplasma arthritidis)).